We begin with the raw amino-acid sequence, 707 residues long: Probable potassium transporter 17 (707 aa).

The segment at 1-25 (MDLEAGSIRPRSDGEGGGPAAGRET) is disordered. Residues 1–34 (MDLEAGSIRPRSDGEGGGPAAGRETDDSNVWKDL) lie on the Cytoplasmic side of the membrane. A helical transmembrane segment spans residues 35 to 55 (FLAYKTLGVVFGGLVTSPLYV). The Extracellular segment spans residues 56–71 (YPSMNLSSPTEADYLG). N-linked (GlcNAc...) asparagine glycosylation occurs at N60. A helical transmembrane segment spans residues 72-92 (IYSIMFWTLTLIGVVKYVCIA). Over 93-157 (LNADDHGEGG…FFEQSITARR (65 aa)) the chain is Cytoplasmic. A helical transmembrane segment spans residues 158–178 (VLLFVAVLGMCMLIGDGILTP). Residues 179–194 (AISVLSAIDGIRGPFP) are Extracellular-facing. A helical membrane pass occupies residues 195–215 (TVSKPVVEALSAAILIGLFLL). Residues 216–222 (QKYGTSK) lie on the Cytoplasmic side of the membrane. Residues 223–243 (VSFLFSPIMAAWTFTTPIIGL) form a helical membrane-spanning segment. The Extracellular portion of the chain corresponds to 244 to 276 (YSIVHYYPGIFKAISPYYIVHFFLRNKRQGWQL). The helical transmembrane segment at 277 to 297 (LGGTVLCITGAEAMFADLGHF) threads the bilayer. The Cytoplasmic segment spans residues 298–305 (SKKAIQIA). The chain crosses the membrane as a helical span at residues 306-326 (FLSSIYPSLVLTYAGQTAYLI). The Extracellular segment spans residues 327-343 (NNVNDFGDGFYKFVPRP). Residues 344 to 364 (VYWPMFVVATLAAIVASQSLI) form a helical membrane-spanning segment. The Cytoplasmic segment spans residues 365–402 (SATFSVIKQSVVLDYFPRVKVVHTSQHKEGEVYSPEIN). Residues 403–423 (YILMVLCVGVILGFGGGKAIG) form a helical membrane-spanning segment. At 424–427 (NAFG) the chain is on the extracellular side. The chain crosses the membrane as a helical span at residues 428-448 (VVVIMVMLITTVLLTLVMIII). Topologically, residues 449–454 (WRTPLV) are cytoplasmic. The helical transmembrane segment at 455 to 475 (LAGLYFVPFFIMEGAYVSAVF) threads the bilayer. Topologically, residues 476–480 (TKIPE) are extracellular. The chain crosses the membrane as a helical span at residues 481–501 (GGWLPFAVSITLAMIMFGWYY). Residues 502–707 (GRQRKFEYEM…RVEIGMLYKV (206 aa)) lie on the Cytoplasmic side of the membrane.

It belongs to the HAK/KUP transporter (TC 2.A.72.3) family.

It is found in the membrane. High-affinity potassium transporter. The protein is Probable potassium transporter 17 (HAK17) of Oryza sativa subsp. japonica (Rice).